Reading from the N-terminus, the 127-residue chain is Large ribosomal subunit protein bL17 (127 aa).

It belongs to the bacterial ribosomal protein bL17 family. As to quaternary structure, part of the 50S ribosomal subunit. Contacts protein L32.

The sequence is that of Large ribosomal subunit protein bL17 from Limosilactobacillus reuteri (strain DSM 20016) (Lactobacillus reuteri).